Here is a 361-residue protein sequence, read N- to C-terminus: Phospho-N-acetylmuramoyl-pentapeptide-transferase (361 aa).

A run of 10 helical transmembrane segments spans residues 25–45 (TGGA…WIIN), 72–92 (TPTM…VLWA), 95–115 (VNPY…VGFY), 133–153 (TRLL…VWLG), 169–189 (VVLN…VGAG), 200–220 (GLAI…AYLA), 240–260 (LAVL…FNAP), 264–284 (IFMG…IAVA), 289–309 (IVLA…IVQV), and 338–358 (QIVI…LATL).

It belongs to the glycosyltransferase 4 family. MraY subfamily. Mg(2+) is required as a cofactor.

Its subcellular location is the cell inner membrane. It catalyses the reaction UDP-N-acetyl-alpha-D-muramoyl-L-alanyl-gamma-D-glutamyl-meso-2,6-diaminopimeloyl-D-alanyl-D-alanine + di-trans,octa-cis-undecaprenyl phosphate = di-trans,octa-cis-undecaprenyl diphospho-N-acetyl-alpha-D-muramoyl-L-alanyl-D-glutamyl-meso-2,6-diaminopimeloyl-D-alanyl-D-alanine + UMP. It participates in cell wall biogenesis; peptidoglycan biosynthesis. Catalyzes the initial step of the lipid cycle reactions in the biosynthesis of the cell wall peptidoglycan: transfers peptidoglycan precursor phospho-MurNAc-pentapeptide from UDP-MurNAc-pentapeptide onto the lipid carrier undecaprenyl phosphate, yielding undecaprenyl-pyrophosphoryl-MurNAc-pentapeptide, known as lipid I. The sequence is that of Phospho-N-acetylmuramoyl-pentapeptide-transferase from Rhodopseudomonas palustris (strain BisB5).